The following is a 654-amino-acid chain: Probable Xaa-Pro aminopeptidase P (654 aa).

Mn(2+) is bound by residues aspartate 449, aspartate 460, glutamate 558, and glutamate 572.

The protein belongs to the peptidase M24B family. Requires Mn(2+) as cofactor.

It carries out the reaction Release of any N-terminal amino acid, including proline, that is linked to proline, even from a dipeptide or tripeptide.. Functionally, catalyzes the removal of a penultimate prolyl residue from the N-termini of peptides. This Aspergillus flavus (strain ATCC 200026 / FGSC A1120 / IAM 13836 / NRRL 3357 / JCM 12722 / SRRC 167) protein is Probable Xaa-Pro aminopeptidase P (ampp).